The chain runs to 159 residues: NAD(P)H-quinone oxidoreductase subunit J, chloroplastic (159 aa).

It belongs to the complex I 30 kDa subunit family. As to quaternary structure, NDH is composed of at least 16 different subunits, 5 of which are encoded in the nucleus.

It localises to the plastid. The protein resides in the chloroplast thylakoid membrane. It catalyses the reaction a plastoquinone + NADH + (n+1) H(+)(in) = a plastoquinol + NAD(+) + n H(+)(out). It carries out the reaction a plastoquinone + NADPH + (n+1) H(+)(in) = a plastoquinol + NADP(+) + n H(+)(out). In terms of biological role, NDH shuttles electrons from NAD(P)H:plastoquinone, via FMN and iron-sulfur (Fe-S) centers, to quinones in the photosynthetic chain and possibly in a chloroplast respiratory chain. The immediate electron acceptor for the enzyme in this species is believed to be plastoquinone. Couples the redox reaction to proton translocation, and thus conserves the redox energy in a proton gradient. The sequence is that of NAD(P)H-quinone oxidoreductase subunit J, chloroplastic from Populus trichocarpa (Western balsam poplar).